A 377-amino-acid chain; its full sequence is Probable tRNA pseudouridine synthase D (377 aa).

D89 serves as the catalytic Nucleophile. Residues 160-377 (YLPAFIGYQR…ILRGDPRKFT (218 aa)) form the TRUD domain.

Belongs to the pseudouridine synthase TruD family.

The enzyme catalyses uridine(13) in tRNA = pseudouridine(13) in tRNA. Functionally, could be responsible for synthesis of pseudouridine from uracil-13 in transfer RNAs. The polypeptide is Probable tRNA pseudouridine synthase D (Saccharolobus solfataricus (strain ATCC 35092 / DSM 1617 / JCM 11322 / P2) (Sulfolobus solfataricus)).